The following is a 989-amino-acid chain: Serine-repeat antigen protein 5 (989 aa).

A signal peptide spans 1 to 16 (MKSYISLFFILCVIFN). Disordered stretches follow at residues 26-91 (SQTG…EKQD) and 165-245 (LPSN…RNLQ). Composition is skewed to low complexity over residues 52–87 (QGST…STSS), 167–180 (SNGT…STGT), and 191–225 (SSSS…SSSS). S167 carries the phosphoserine modification. N-linked (GlcNAc...) asparagine glycosylation occurs at N168. The tract at residues 208–245 (SSSSSSSSSSSSSSSSSSESLPANGPDSPTVKPPRNLQ) is interaction with PTKL. N310 carries an N-linked (GlcNAc...) asparagine glycan. The tract at residues 365-382 (YKYLSEDIVSNFKEIKAE) is interaction with host VTN. The cysteines at positions 437 and 489 are disulfide-linked. T541 bears the Phosphothreonine mark. Cystine bridges form between C559–C564, C573–C602, C585–C628, C619–C664, and C747–C801. Positions 571–989 (NNCISNLQVE…TNNECYFCYV (419 aa)) are thiol-protease-like. Residues H754 and N779 contribute to the active site. N-linked (GlcNAc...) asparagine glycosylation is present at N820. The propeptide at 835–878 (KASPEFYHNLYFKNFNVGKKNLFSEKEDNENNKKLGNNYIIFGQ) is inhibition peptide. S858 bears the Phosphoserine mark.

The protein belongs to the peptidase C1 family. In terms of assembly, may interact (via C-terminus) with PTKL (via SAM domain). As to quaternary structure, interacts (via C-terminus) with human VTN (via hemopexin repeat 2); may form heterotetramers of two VTN and SERA5 P47 heterodimers; the interaction may protect merozoites from phagocytosis by host monocytes; VTN glycosylation appears to be dispensable for the interaction. Monomer. Interacts with kinase CPK1/CDPK1 at the schizont stage. Phosphorylation by CPK1/CDPK1 increases SERA5 protease activity towards a synthetic peptide in vitro. Post-translationally, just prior to merozoite egress from host erythrocytes, proteolytically cleaved into multiple fragments. Cleaved by SUB1 into p47 and p73, p73 is further cleaved by SUB1 into p56 and p18 and p56 is further processed into p50 by an unidentified protease. p47 remains covalently associated with p18 via disulfide bond. p47 can be processed into p25n and p25c by SUB1. p25c and p25n remain associated with p18. Proteolytic processing is essential for merozoite egress from host erythrocytes. The cleavage of the propeptide to produce p50 is necessary for protease activity and to promote merozoite egress.

It is found in the parasitophorous vacuole. Its subcellular location is the secreted. The protein resides in the cell membrane. Plays an essential role during the asexual blood stage development by controlling the kinetics of merozoite egress from host erythrocytes. Specifically, prevents premature rupture of the parasitophorous vacuole and host erythrocyte membranes. Its function is as follows. May prevent merozoite phagocytosis by host monocytes via interaction with host VTN at the merozoite surface. Plays a role in parasite growth. In terms of biological role, protease activity is controversial. This is Serine-repeat antigen protein 5 from Plasmodium falciparum (isolate CDC / Honduras).